A 223-amino-acid polypeptide reads, in one-letter code: MNILIFGPNGSGKGTQGDLIKQKYNLAHIESGAIFREHIGGGTELGKKAKAYIDRGDLVPDEITIPMVLETLKTKGQHGWLLDGFPRNMVQAEKLWEALQKEGMRLDYVVEILLPRETAKNRIMGRRLCKNNNNHPNNIFIEAIKPNGDVCRVCGGTLSSRSDDQDETAINKRHDIYYNTTDGTLAAAYFFKKLADQGKTKYIELNGEGSIESIKETLLSKLA.

10–15 contacts ATP; the sequence is GSGKGT. The NMP stretch occupies residues 30-59; sequence ESGAIFREHIGGGTELGKKAKAYIDRGDLV. AMP-binding positions include Ser-31, Arg-36, 57–59, 84–87, and Gln-91; these read DLV and GFPR. Residues 125–164 are LID; that stretch reads GRRLCKNNNNHPNNIFIEAIKPNGDVCRVCGGTLSSRSDD. Arg-126 is a binding site for ATP. AMP is bound by residues Arg-161 and Arg-173. Gly-209 contributes to the ATP binding site.

The protein belongs to the adenylate kinase family. In terms of assembly, monomer.

Its subcellular location is the cytoplasm. It carries out the reaction AMP + ATP = 2 ADP. It participates in purine metabolism; AMP biosynthesis via salvage pathway; AMP from ADP: step 1/1. Its function is as follows. Catalyzes the reversible transfer of the terminal phosphate group between ATP and AMP. Plays an important role in cellular energy homeostasis and in adenine nucleotide metabolism. This is Adenylate kinase from Desulfovibrio desulfuricans (strain ATCC 27774 / DSM 6949 / MB).